A 1096-amino-acid polypeptide reads, in one-letter code: Eukaryotic translation initiation factor 3 subunit A (1096 aa).

In terms of domain architecture, PCI spans 323–502 (QATRVLLATL…GSIHFGAADA (180 aa)). Coiled coils occupy residues 591–643 (SERQ…IDRK), 677–761 (SVLR…RMQK), and 811–839 (KEGA…ERRA). Positions 808–852 (ELPKEGAEERMASAREVAEQTRRDEQEKERRAVRESQRPSKREIV) are enriched in basic and acidic residues. The tract at residues 808–1096 (ELPKEGAEER…ADDDRNWRQK (289 aa)) is disordered. Polar residues predominate over residues 865-875 (AQPTQPRTISS). Basic and acidic residues-rich tracts occupy residues 878-890 (FGER…RYRE), 933-942 (SNREQARGEA), and 955-973 (QRDR…KRGE). The span at 1008 to 1023 (DSSQRTSAATPTTQPW) shows a compositional bias: polar residues. Basic and acidic residues predominate over residues 1085–1096 (GAADDDRNWRQK).

This sequence belongs to the eIF-3 subunit A family. Component of the eukaryotic translation initiation factor 3 (eIF-3) complex.

Its subcellular location is the cytoplasm. RNA-binding component of the eukaryotic translation initiation factor 3 (eIF-3) complex, which is involved in protein synthesis of a specialized repertoire of mRNAs and, together with other initiation factors, stimulates binding of mRNA and methionyl-tRNAi to the 40S ribosome. The eIF-3 complex specifically targets and initiates translation of a subset of mRNAs involved in cell proliferation. This chain is Eukaryotic translation initiation factor 3 subunit A, found in Brugia malayi (Filarial nematode worm).